The sequence spans 215 residues: UPF0502 protein YceH (215 aa).

It belongs to the UPF0502 family.

This is UPF0502 protein YceH from Salmonella paratyphi C (strain RKS4594).